A 252-amino-acid polypeptide reads, in one-letter code: Imidazole glycerol phosphate synthase subunit HisF (252 aa).

Residues aspartate 11 and aspartate 130 contribute to the active site.

This sequence belongs to the HisA/HisF family. Heterodimer of HisH and HisF.

The protein localises to the cytoplasm. The catalysed reaction is 5-[(5-phospho-1-deoxy-D-ribulos-1-ylimino)methylamino]-1-(5-phospho-beta-D-ribosyl)imidazole-4-carboxamide + L-glutamine = D-erythro-1-(imidazol-4-yl)glycerol 3-phosphate + 5-amino-1-(5-phospho-beta-D-ribosyl)imidazole-4-carboxamide + L-glutamate + H(+). Its pathway is amino-acid biosynthesis; L-histidine biosynthesis; L-histidine from 5-phospho-alpha-D-ribose 1-diphosphate: step 5/9. IGPS catalyzes the conversion of PRFAR and glutamine to IGP, AICAR and glutamate. The HisF subunit catalyzes the cyclization activity that produces IGP and AICAR from PRFAR using the ammonia provided by the HisH subunit. The polypeptide is Imidazole glycerol phosphate synthase subunit HisF (Dictyoglomus thermophilum (strain ATCC 35947 / DSM 3960 / H-6-12)).